We begin with the raw amino-acid sequence, 509 residues long: Cytochrome P450 monooxygenase AFT11-1 (509 aa).

Heme is bound at residue Cys432.

This sequence belongs to the cytochrome P450 family. It depends on heme as a cofactor.

It participates in mycotoxin biosynthesis. Functionally, cytochrome P450 monooxygenase; part of the gene clusters that mediate the biosynthesis of the host-selective toxins (HSTs) AF-toxins responsible for Alternaria black spot of strawberry disease by the strawberry pathotype. AF-toxin I and III are valine derivatives of 2,3-dyhydroxy-isovaleric acid and 2-hydroxy-isovaleric acid respectively, while AF II is an isoleucine derivative of 2-hydroxy-valeric acid. These derivatives are bound to a 9,10-epoxy-8-hydroxy-9-methyl-decatrienoic acid (EDA) moiety. On cellular level, AF-toxins affect plasma membrane of susceptible cells and cause a sudden increase in loss of K(+) after a few minutes of toxin treatment. The aldo-keto reductase AFTS1 catalyzes the conversion of 2-keto-isovaleric acid (2-KIV) to 2-hydroxy-isovaleric acid (2-HIV) by reduction of its ketone to an alcohol. The acyl-CoA ligase AFT1, the hydrolase AFT2 and the enoyl-CoA hydratases AFT3 and AFT6, but also the polyketide synthase AFT9, the acyl-CoA dehydrogenase AFT10, the cytochrome P450 monooxygenase AFT11 and the oxidoreductase AFT12 are all involved in the biosynthesis of the AK-, AF- and ACT-toxin common EDA structural moiety. The exact function of each enzyme, and of additional enzymes identified within the AF-toxin clusters have still to be determined. This is Cytochrome P450 monooxygenase AFT11-1 from Alternaria alternata (Alternaria rot fungus).